The chain runs to 72 residues: Translation initiation factor IF-1 (72 aa).

The S1-like domain maps to methionine 1–arginine 72.

It belongs to the IF-1 family. As to quaternary structure, component of the 30S ribosomal translation pre-initiation complex which assembles on the 30S ribosome in the order IF-2 and IF-3, IF-1 and N-formylmethionyl-tRNA(fMet); mRNA recruitment can occur at any time during PIC assembly.

The protein resides in the cytoplasm. Its function is as follows. One of the essential components for the initiation of protein synthesis. Stabilizes the binding of IF-2 and IF-3 on the 30S subunit to which N-formylmethionyl-tRNA(fMet) subsequently binds. Helps modulate mRNA selection, yielding the 30S pre-initiation complex (PIC). Upon addition of the 50S ribosomal subunit IF-1, IF-2 and IF-3 are released leaving the mature 70S translation initiation complex. The protein is Translation initiation factor IF-1 of Sodalis glossinidius (strain morsitans).